Consider the following 396-residue polypeptide: Cathepsin E (396 aa).

A signal peptide spans 1–19 (MKTLLLLLLVLLELGEAQG). Positions 20-53 (SLHRVPLRRHPSLKKKLRARSQLSEFWKSHNLDM) are cleaved as a propeptide — activation peptide. Residues 78–396 (YFGTISIGSP…NRVGLAPAVP (319 aa)) form the Peptidase A1 domain. N-linked (GlcNAc...) asparagine glycosylation occurs at N90. D96 is a catalytic residue. 2 disulfides stabilise this stretch: C109–C114 and C272–C276. Residue D281 is part of the active site. C314 and C351 form a disulfide bridge.

The protein belongs to the peptidase A1 family. Homodimer; disulfide-linked. In terms of processing, glycosylated. The nature of the carbohydrate chain varies between cell types. In fibroblasts, the proenzyme contains a high mannose-type oligosaccharide, while the mature enzyme contains a complex-type oligosaccharide. In erythrocyte membranes, both the proenzyme and mature enzyme contain a complex-type oligosaccharide. Two forms are produced by autocatalytic cleavage, form I begins at Ile-54, form II begins at Thr-57. As to expression, expressed abundantly in the stomach, the Clara cells of the lung and activated B-lymphocytes, and at lower levels in lymph nodes, skin and spleen. Not expressed in resting B-lymphocytes.

It localises to the endosome. It carries out the reaction Similar to cathepsin D, but slightly broader specificity.. May have a role in immune function. Probably involved in the processing of antigenic peptides during MHC class II-mediated antigen presentation. May play a role in activation-induced lymphocyte depletion in the thymus, and in neuronal degeneration and glial cell activation in the brain. The sequence is that of Cathepsin E (CTSE) from Homo sapiens (Human).